The sequence spans 141 residues: uncharacterized protein (141 aa).

The stretch at lysine 24–threonine 52 forms a coiled coil.

This is an uncharacterized protein from Invertebrate iridescent virus 6 (IIV-6).